A 550-amino-acid chain; its full sequence is Arginine--tRNA ligase (550 aa).

The 'HIGH' region signature appears at 124-134 (ANPTGPLHVGH).

This sequence belongs to the class-I aminoacyl-tRNA synthetase family. Monomer.

It localises to the cytoplasm. It catalyses the reaction tRNA(Arg) + L-arginine + ATP = L-arginyl-tRNA(Arg) + AMP + diphosphate. This is Arginine--tRNA ligase from Desulfovibrio desulfuricans (strain ATCC 27774 / DSM 6949 / MB).